Reading from the N-terminus, the 211-residue chain is Protein-L-isoaspartate O-methyltransferase (211 aa).

Residue S62 is part of the active site.

It belongs to the methyltransferase superfamily. L-isoaspartyl/D-aspartyl protein methyltransferase family.

It is found in the cytoplasm. The catalysed reaction is [protein]-L-isoaspartate + S-adenosyl-L-methionine = [protein]-L-isoaspartate alpha-methyl ester + S-adenosyl-L-homocysteine. Its function is as follows. Catalyzes the methyl esterification of L-isoaspartyl residues in peptides and proteins that result from spontaneous decomposition of normal L-aspartyl and L-asparaginyl residues. It plays a role in the repair and/or degradation of damaged proteins. This chain is Protein-L-isoaspartate O-methyltransferase, found in Shewanella sp. (strain ANA-3).